Here is a 156-residue protein sequence, read N- to C-terminus: tRNA (cytidine(34)-2'-O)-methyltransferase (156 aa).

3 residues coordinate S-adenosyl-L-methionine: glycine 102, leucine 124, and serine 132.

This sequence belongs to the class IV-like SAM-binding methyltransferase superfamily. RNA methyltransferase TrmH family. TrmL subfamily. Homodimer.

Its subcellular location is the cytoplasm. The catalysed reaction is cytidine(34) in tRNA + S-adenosyl-L-methionine = 2'-O-methylcytidine(34) in tRNA + S-adenosyl-L-homocysteine + H(+). The enzyme catalyses 5-carboxymethylaminomethyluridine(34) in tRNA(Leu) + S-adenosyl-L-methionine = 5-carboxymethylaminomethyl-2'-O-methyluridine(34) in tRNA(Leu) + S-adenosyl-L-homocysteine + H(+). Functionally, methylates the ribose at the nucleotide 34 wobble position in the two leucyl isoacceptors tRNA(Leu)(CmAA) and tRNA(Leu)(cmnm5UmAA). Catalyzes the methyl transfer from S-adenosyl-L-methionine to the 2'-OH of the wobble nucleotide. The chain is tRNA (cytidine(34)-2'-O)-methyltransferase from Burkholderia ambifaria (strain ATCC BAA-244 / DSM 16087 / CCUG 44356 / LMG 19182 / AMMD) (Burkholderia cepacia (strain AMMD)).